The primary structure comprises 443 residues: Chorionicgonadotropic hormone-like protein (443 aa).

The span at 263-286 (RCAGRPCPRRHRRPCNASKSHRPM) shows a compositional bias: basic residues. Residues 263–292 (RCAGRPCPRRHRRPCNASKSHRPMRMQQRD) are disordered.

The protein to mammalian CGHB.

The protein resides in the secreted. Its subcellular location is the cell wall. Cell wall protein that resembles the beta subunit of human chorionic gonadotropin. Stimulates growth and change in morphology. This Stenotrophomonas maltophilia (Pseudomonas maltophilia) protein is Chorionicgonadotropic hormone-like protein (xcg).